Here is a 392-residue protein sequence, read N- to C-terminus: G2/mitotic-specific cyclin-B (392 aa).

This sequence belongs to the cyclin family. Cyclin AB subfamily.

Functionally, essential for the control of the cell cycle at the G2/M (mitosis) transition. Interacts with the CDC2 protein kinase to form MPF. G2/M cyclins accumulate steadily during G2 and are abruptly destroyed at mitosis. This chain is G2/mitotic-specific cyclin-B, found in Hydra viridissima (Green hydra).